Here is an 83-residue protein sequence, read N- to C-terminus: NAD(P)H-quinone oxidoreductase subunit L, organellar chromatophore (83 aa).

2 consecutive transmembrane segments (helical) span residues 17-37 and 53-73; these read LLLA…LALY and LFVY…SPFL.

Belongs to the complex I NdhL subunit family. In terms of assembly, NDH-1 can be composed of about 15 different subunits; different subcomplexes with different compositions have been identified which probably have different functions.

It is found in the plastid. The protein localises to the organellar chromatophore thylakoid membrane. It carries out the reaction a plastoquinone + NADH + (n+1) H(+)(in) = a plastoquinol + NAD(+) + n H(+)(out). The catalysed reaction is a plastoquinone + NADPH + (n+1) H(+)(in) = a plastoquinol + NADP(+) + n H(+)(out). NDH-1 shuttles electrons from an unknown electron donor, via FMN and iron-sulfur (Fe-S) centers, to quinones in the respiratory and/or the photosynthetic chain. The immediate electron acceptor for the enzyme in this species is believed to be plastoquinone. Couples the redox reaction to proton translocation, and thus conserves the redox energy in a proton gradient. The chain is NAD(P)H-quinone oxidoreductase subunit L, organellar chromatophore from Paulinella chromatophora.